The chain runs to 475 residues: 3-hydroxyadipyl-CoA dehydrogenase (475 aa).

This sequence belongs to the 3-hydroxyacyl-CoA dehydrogenase family. In terms of assembly, homotrimer.

The enzyme catalyses (3S)-3-hydroxyadipyl-CoA + NAD(+) = 3-oxoadipyl-CoA + NADH + H(+). The protein operates within aromatic compound metabolism; phenylacetate degradation. Its function is as follows. Catalyzes the oxidation of 3-hydroxyadipyl-CoA to yield 3-oxoadipyl-CoA. This Escherichia coli (strain K12) protein is 3-hydroxyadipyl-CoA dehydrogenase (paaH).